The chain runs to 438 residues: GTPase Der (438 aa).

2 EngA-type G domains span residues 4-168 (PIVA…NDPS) and 177-352 (IRIA…DNYS). Residues 10–17 (GRPNVGKS), 57–61 (DTGGI), 120–123 (NKID), 183–190 (GKPNVGKS), 230–234 (DTAGL), and 295–298 (NKWD) each bind GTP. The region spanning 353-437 (KRVSTGLLND…GIEIEYRARK (85 aa)) is the KH-like domain.

This sequence belongs to the TRAFAC class TrmE-Era-EngA-EngB-Septin-like GTPase superfamily. EngA (Der) GTPase family. Associates with the 50S ribosomal subunit.

Its function is as follows. GTPase that plays an essential role in the late steps of ribosome biogenesis. This is GTPase Der from Clostridium perfringens (strain ATCC 13124 / DSM 756 / JCM 1290 / NCIMB 6125 / NCTC 8237 / Type A).